The sequence spans 310 residues: Phosphoribosylaminoimidazole-succinocarboxamide synthase (310 aa).

It belongs to the SAICAR synthetase family.

It catalyses the reaction 5-amino-1-(5-phospho-D-ribosyl)imidazole-4-carboxylate + L-aspartate + ATP = (2S)-2-[5-amino-1-(5-phospho-beta-D-ribosyl)imidazole-4-carboxamido]succinate + ADP + phosphate + 2 H(+). It functions in the pathway purine metabolism; IMP biosynthesis via de novo pathway; 5-amino-1-(5-phospho-D-ribosyl)imidazole-4-carboxamide from 5-amino-1-(5-phospho-D-ribosyl)imidazole-4-carboxylate: step 1/2. The chain is Phosphoribosylaminoimidazole-succinocarboxamide synthase from Xanthomonas axonopodis pv. citri (strain 306).